Consider the following 88-residue polypeptide: Small ribosomal subunit protein bS20 (88 aa).

This sequence belongs to the bacterial ribosomal protein bS20 family.

Functionally, binds directly to 16S ribosomal RNA. The protein is Small ribosomal subunit protein bS20 of Desulforudis audaxviator (strain MP104C).